The following is a 601-amino-acid chain: uncharacterized protein (601 aa).

It belongs to the chlamydial CPn_1016/CT_858/TC_0248 family.

This is an uncharacterized protein from Chlamydia muridarum (strain MoPn / Nigg).